The primary structure comprises 155 residues: FHA domain-containing protein FhaB (155 aa).

Residues 6–28 (LQLTRVGFLLLLWLFIWSVLRIL) traverse the membrane as a helical segment. A Phosphothreonine modification is found at Thr-36. In terms of domain architecture, FHA spans 83–132 (VLIGRADDSTLVLTDDYASTRHARLSPRGSEWYVEDLGSTNGTYLDRAKV).

In terms of processing, phosphorylated by PknB. Dephosphorylated by PstP.

It localises to the cell membrane. The chain is FHA domain-containing protein FhaB (fhaB) from Mycolicibacterium smegmatis (strain ATCC 700084 / mc(2)155) (Mycobacterium smegmatis).